The chain runs to 55 residues: Antiviral protein GAP-31 (55 aa).

The disordered stretch occupies residues 29–55 (KPEGNSHGIPSLRKSSDDPGSSFVVAG).

Belongs to the ribosome-inactivating protein family. Type 1 RIP subfamily.

It catalyses the reaction Endohydrolysis of the N-glycosidic bond at one specific adenosine on the 28S rRNA.. Functionally, single-chain ribosome-inactivating protein, possessing high antiviral potency and low toxicity to normal cells in culture and to intact animals. Capable of inhibiting HIV-1 infection and replication. This Suregada multiflora (False lime) protein is Antiviral protein GAP-31.